A 238-amino-acid chain; its full sequence is Uridylate kinase (238 aa).

13-16 is a binding site for ATP; that stretch reads KLSG. Residue Gly-53 participates in UMP binding. Gly-54 and Arg-58 together coordinate ATP. UMP-binding positions include Asp-73 and 134 to 141; that span reads AGLPYFST. The ATP site is built by Asn-162, Tyr-168, and Asp-171.

The protein belongs to the UMP kinase family. Homohexamer.

The protein localises to the cytoplasm. It catalyses the reaction UMP + ATP = UDP + ADP. It participates in pyrimidine metabolism; CTP biosynthesis via de novo pathway; UDP from UMP (UMPK route): step 1/1. Inhibited by UTP. Functionally, catalyzes the reversible phosphorylation of UMP to UDP. This chain is Uridylate kinase, found in Clavibacter michiganensis subsp. michiganensis (strain NCPPB 382).